A 1107-amino-acid chain; its full sequence is MAKPVKYDEEEEEVSSSGEEEEEQSDGAGSGSGEEEDEEEEEAPAAAAGEAAGGEEEEVDEEEIEAVTTGAGADEEEEESGAAAAAPGEGDEESQSTEDDEAVVGEDDDADEAEGGAVVGKREKARLKEMQKLKKQKIQEILDTQNAAVDADMNNKGKGRLKYLLQQTEIFAHFAKGNQSKEKKPRGRGRHASKMTEEEEDEEYLKEEEDALAGSGGTRLLSQPSCIKGKMRDYQLAGLNWLIRLYENGINGILADEMGLGKTLQTISLLGYLHEFRGITGPHMVVAPKSTLGNWIKEIQRFCPILRAVKFLGNPEERNHIRENLLQPGKFDVCVTSFEMAIKEKTTLKRFSWRYIIIDEAHRIKNENSLLSKTMRIYNTNYRLLITGTPLQNNLHELWSLLNFLLPEIFSSAETFDEWFQISGENDQQEVVQQLHKVLRPFLLRRLKSDVEKGLPPKKETILKVGMSQMQKQYYRALLQKDLEVINAGGERKRLLNIAMQLRKCCNHPYLFQGAEPGPPYTTGEHLVENAGKMVLLDKLLPKLKDRDSRVLIFSQMTRLLDILEDYLMYRGYQYCRIDGNTGGEDRDASIEAFNKPGSEKFVFLLSTRAGGLGINLATADVVVLYDSDWNPQADLQAQDRAHRIGQKKEVQVFRFCTEYTIEEKVIERAYKKLALDALVIQQGRLAEQKTVNKDDLLQMVRFGAEMVFSSKDSTITDEDIDRIIAKGEETTAELDAKMKKFTEDAIKFKMDDTAELYDFDDDKEENKLDFKKLVSDNWIEPPRRERKRNYSESEYFKQALRQGAPAKPREPRIPRMPHLHDFQFFNNQRLNELYEKEVRYLMQANQKKDTIDGEDEDQLEPLTAEEQEEKEQLLEEGFATWTRRDFNTFIRACEKYGRNDIRSIAAEMEGKTEEEVQRYAKVFKERYKELSDYDRIIKNIERGEARISRKDEIMRAIGKKLDRYKNPWLELKIQYGQNKGKFYNEECDRFMLCMVHKLGYGNWDELKAAFRMSPLFRFDWFVKSRTTQELARRCDTLIRLVEKENQEYDEQERQARKDKRMAKNMTPTKRSALRVSEGETTPSNSFKRRRQSLMDDYVGSGRRKRG.

Disordered stretches follow at residues 1–124 and 177–217; these read MAKP…KREK and GNQS…GSGG. Acidic residues-rich tracts occupy residues 8-25, 33-43, 53-65, and 89-114; these read DEEEEEVSSSGEEEEEQS, GEEEDEEEEEA, GGEEEEVDEEEIE, and EGDEESQSTEDDEAVVGEDDDADEAE. Residues 121-147 are a coiled coil; sequence KREKARLKEMQKLKKQKIQEILDTQNA. Residues 183–193 are compositionally biased toward basic residues; it reads KKPRGRGRHAS. A compositionally biased stretch (acidic residues) spans 197–211; the sequence is EEEEDEEYLKEEEDA. In terms of domain architecture, Helicase ATP-binding spans 243–408; sequence IRLYENGING…WSLLNFLLPE (166 aa). An ATP-binding site is contributed by 256–263; sequence DEMGLGKT. The short motif at 359–362 is the DEAH box element; that stretch reads DEAH. The 152-residue stretch at 536–687 folds into the Helicase C-terminal domain; sequence LLDKLLPKLK…ALVIQQGRLA (152 aa). 2 SANT domains span residues 877–929 and 978–1039; these read EGFA…ERYK and QNKG…DTLI. Residues 1029 to 1067 adopt a coiled-coil conformation; that stretch reads QELARRCDTLIRLVEKENQEYDEQERQARKDKRMAKNMT. The segment at 1049-1107 is disordered; that stretch reads YDEQERQARKDKRMAKNMTPTKRSALRVSEGETTPSNSFKRRRQSLMDDYVGSGRRKRG.

This sequence belongs to the SNF2/RAD54 helicase family. ISWI subfamily.

The protein resides in the nucleus. Its function is as follows. Possesses intrinsic ATP-dependent nucleosome-remodeling activity. Constitutes the catalytic subunit of several complexes capable of forming ordered nucleosome arrays on chromatin in vitro. This chain is Probable chromatin-remodeling complex ATPase chain, found in Oryza sativa subsp. japonica (Rice).